The primary structure comprises 469 residues: Pancreatic lipase-related protein 2 (469 aa).

Residues 1-17 (MLPPWTLGLLLLATVRG) form the signal peptide. C21 and C27 are joined by a disulfide. The segment at 93–105 (IHGFLDKAEDSWP) is required for galactolipase activity. A disulfide bridge links C109 with C120. S171 acts as the Nucleophile in catalysis. D195 serves as the catalytic Charge relay system. Positions 206, 209, 211, and 214 each coordinate Ca(2+). C256 and C280 form a disulfide bridge. The segment at 257-279 (KKNVLSTITDIDGIWEGIGGFVS) is required for galactolipase activity. The Charge relay system role is filled by H282. 2 disulfide bridges follow: C304-C315 and C318-C323. Residues N353 and N428 are each glycosylated (N-linked (GlcNAc...) asparagine). The region spanning 357–469 (WRYKISVTLS…ENVLQSLYPC (113 aa)) is the PLAT domain. C453 and C469 form a disulfide bridge.

Belongs to the AB hydrolase superfamily. Lipase family. In terms of tissue distribution, pancreas.

It is found in the secreted. The protein resides in the zymogen granule membrane. Its subcellular location is the cell projection. The protein localises to the neuron projection. It catalyses the reaction a triacylglycerol + H2O = a diacylglycerol + a fatty acid + H(+). It carries out the reaction a 1,2-diacyl-3-O-(beta-D-galactosyl)-sn-glycerol + 2 H2O = 3-beta-D-galactosyl-sn-glycerol + 2 a fatty acid + 2 H(+). The enzyme catalyses 1,2,3-tri-(9Z-octadecenoyl)-glycerol + H2O = di-(9Z)-octadecenoylglycerol + (9Z)-octadecenoate + H(+). The catalysed reaction is di-(9Z)-octadecenoylglycerol + H2O = (9Z-octadecenoyl)-glycerol + (9Z)-octadecenoate + H(+). It catalyses the reaction (9Z-octadecenoyl)-glycerol + H2O = glycerol + (9Z)-octadecenoate + H(+). It carries out the reaction 1-(9Z-octadecenoyl)-glycerol + H2O = glycerol + (9Z)-octadecenoate + H(+). The enzyme catalyses 1,2,3-tripropanoylglycerol + H2O = dipropanoylglycerol + propanoate + H(+). The catalysed reaction is 1,2,3-tributanoylglycerol + H2O = dibutanoylglycerol + butanoate + H(+). It catalyses the reaction 1,2,3-trioctanoylglycerol + H2O = dioctanoylglycerol + octanoate + H(+). It carries out the reaction 1,2-didecanoylglycerol + H2O = decanoylglycerol + decanoate + H(+). The enzyme catalyses long chain 1,2-diacyl-3-O-beta-D-galactosyl-sn-glycerol + H2O = long chain acyl-3-O-beta-D-galactosyl-sn-glycerol + a fatty acid + H(+). The catalysed reaction is 1,2-dioctanoyl-3-O-beta-D-galactosyl-sn-glycerol + H2O = octanoyl-3-(beta-D-galactosyl)-sn-glycerol + octanoate + H(+). It catalyses the reaction 1,2-didodecanoyl-3-beta-D-galactosyl-sn-glycerol + H2O = dodecanoyl-3-beta-D-galactosyl-sn-glycerol + dodecanoate + H(+). It carries out the reaction 1-beta-D-galactosyl-2,3-didodecanoyl-sn-glycerol + H2O = 1-beta-D-galactosyl-dodecanoyl-sn-glycerol + dodecanoate + H(+). The enzyme catalyses a 1,2-diacyl-3-O-[alpha-D-galactosyl-(1-&gt;6)-beta-D-galactosyl]-sn-glycerol + H2O = acyl-3-O-[alpha-D-galactosyl-(1-&gt;6)-beta-D-galactosyl]-sn-glycerol + a fatty acid + H(+). The catalysed reaction is long chain 1,2-diacyl-3-O-[alpha-D-galactosyl-(1-&gt;6)-beta-D-galactosyl]-sn-glycerol + H2O = long chain acyl-3-O-[alpha-D-galactosyl-(1-&gt;6)-beta-D-galactosyl]-sn-glycerol + a fatty acid + H(+). It catalyses the reaction 1,2-dioctanoyl-3-O-[alpha-D-galactosyl-(1-&gt;6)-beta-D-galactosyl]-sn-glycerol + H2O = octanoyl-3-O-[alpha-D-galactosyl-(1-&gt;6)-beta-D-galactosyl]-sn-glycerol + octanoate + H(+). It carries out the reaction 1,2-didodecanoyl-3-O-[alpha-D-galactosyl-(1-&gt;6)-beta-D-galactosyl]-sn-glycerol + H2O = dodecanoyl-3-O-[alpha-D-galactosyl-(1-&gt;6)-beta-D-galactosyl]-sn-glycerol + dodecanoate + H(+). The enzyme catalyses a 1,2-diacyl-sn-glycero-3-phosphocholine + H2O = a monoacyl-sn-glycero-3-phosphocholine + a fatty acid + H(+). It functions in the pathway glycerolipid metabolism; triacylglycerol degradation. The protein operates within glycolipid metabolism. Regulated by CLPS and bile salts levels ranging 1-5 mM in neonates and 2-30 mM in healthy adults. CLPS stimulates milk fat digestion in the presence of 4 mM bile salts. Triacylglycerol lipase activity toward short- and medium-chain triglycerides is inhibited by increasing concentrations of bile salts and weakly reactivated by CLPS. Optimal triacylglycerol lipase activity is reached at bile salts concentrations ranging from 0.1 to 0.5 mM and then decreases at concentrations higher than 1 mM. Lipase activity toward long-chain glycerolipids is stimulated by CLPS in the presence of 4 mM bile salts. Galactolipase activity is inhibited at high concentrations of bile salts. Triacylglycerol lipase activity is inhibited by anti-obesity drug tetrahydrolipstatin. Lipase that primarily hydrolyzes triglycerides and galactosylglycerides. In neonates, may play a major role in pancreatic digestion of dietary fats such as milk fat globules enriched in long-chain triglycerides. Hydrolyzes short-, medium- and long-chain fatty acyls in triglycerides without apparent positional specificity. Can completely deacylate triacylglycerols. When the liver matures and bile salt synthesis increases, likely functions mainly as a galactolipase and monoacylglycerol lipase. Hydrolyzes monogalactosyldiglycerols (MGDG) and digalactosyldiacylglycerols (DGDG) present in a plant-based diet, releasing long-chain polyunsaturated fatty acids. Hydrolyzes medium- and long-chain fatty acyls in galactolipids. May act together with LIPF to hydrolyze partially digested triglycerides. Hydrolyzes long-chain monoglycerides with high efficiency. In cytotoxic T cells, contributes to perforin-dependent cell lysis, but is unlikely to mediate direct cytotoxicity. Also has low phospholipase activity. In neurons, required for the localization of the phospholipid 1-oleoyl-2-palmitoyl-PC (OPPC) to neurite tips through acyl chain remodeling of membrane phospholipids. The resulting OPPC-rich lipid membrane domain recruits the t-SNARE protein STX4 by selectively interacting with the STX4 transmembrane domain and this promotes surface expression of the dopamine transporter SLC6A3/DAT at neurite tips by facilitating fusion of SLC6A3-containing transport vesicles with the plasma membrane. The polypeptide is Pancreatic lipase-related protein 2 (Homo sapiens (Human)).